Consider the following 439-residue polypeptide: Probable anion transporter 7 (439 aa).

An N-terminal signal peptide occupies residues 1 to 28 (MTALTRMKFPKRYVIVLLTFICTNVCYI). 11 helical membrane-spanning segments follow: residues 53 to 73 (MILSMFYYGYVLSQIPGGWAA), 81 to 101 (VLLLSFVLWSLICGLIPLDPK), 104 to 124 (VILVLSRLFVGVAQGFIFPAI), 143 to 163 (LTTSGMYLGAAGGMLFFPSLV), 167 to 187 (GAQSVFFVEAVLGVAWSVIWL), 232 to 252 (IIFSLPVWAIVVNNFTFHYAL), 280 to 300 (LPYFNMFIFSNIGGVVADHLI), 312 to 332 (KLLNTIGFVVSAVALMALPLF), 338 to 358 (TVLCSSISLGFLALGRAGFAV), 367 to 387 (FAGIVMGVSNTAGTLAGIVGV), and 412 to 432 (TVFFVPGYLCIFSSIIFLIFS).

It belongs to the major facilitator superfamily. Sodium/anion cotransporter (TC 2.A.1.14) family.

Its subcellular location is the cell membrane. In terms of biological role, probable anion transporter. This Oryza sativa subsp. japonica (Rice) protein is Probable anion transporter 7 (PHT4;7).